Consider the following 367-residue polypeptide: 4-hydroxy-3-methylbut-2-en-1-yl diphosphate synthase (flavodoxin) (367 aa).

Residues Cys270, Cys273, Cys305, and Glu312 each contribute to the [4Fe-4S] cluster site.

The protein belongs to the IspG family. The cofactor is [4Fe-4S] cluster.

It carries out the reaction (2E)-4-hydroxy-3-methylbut-2-enyl diphosphate + oxidized [flavodoxin] + H2O + 2 H(+) = 2-C-methyl-D-erythritol 2,4-cyclic diphosphate + reduced [flavodoxin]. It participates in isoprenoid biosynthesis; isopentenyl diphosphate biosynthesis via DXP pathway; isopentenyl diphosphate from 1-deoxy-D-xylulose 5-phosphate: step 5/6. Converts 2C-methyl-D-erythritol 2,4-cyclodiphosphate (ME-2,4cPP) into 1-hydroxy-2-methyl-2-(E)-butenyl 4-diphosphate. This chain is 4-hydroxy-3-methylbut-2-en-1-yl diphosphate synthase (flavodoxin), found in Pasteurella multocida (strain Pm70).